Here is a 260-residue protein sequence, read N- to C-terminus: Electron transfer flavoprotein subunit beta (260 aa).

The protein belongs to the ETF beta-subunit/FixA family. In terms of assembly, heterodimer of an alpha and a beta subunit. It depends on FAD as a cofactor. The cofactor is AMP.

In terms of biological role, the electron transfer flavoprotein serves as a specific electron acceptor for other dehydrogenases. It transfers the electrons to the main respiratory chain via ETF-ubiquinone oxidoreductase (ETF dehydrogenase). The chain is Electron transfer flavoprotein subunit beta (etfB) from Thermoanaerobacterium thermosaccharolyticum (strain ATCC 7956 / DSM 571 / NCIMB 9385 / NCA 3814 / NCTC 13789 / WDCM 00135 / 2032) (Clostridium thermosaccharolyticum).